The primary structure comprises 132 residues: Outer membrane protein assembly factor BamE (132 aa).

An N-terminal signal peptide occupies residues 1–16 (MQKLVLTLLVTSLLAG). A lipid anchor (N-palmitoyl cysteine) is attached at Cys-17. Cys-17 carries the S-diacylglycerol cysteine lipid modification.

Belongs to the BamE family. Part of the Bam complex.

The protein localises to the cell outer membrane. Functionally, part of the outer membrane protein assembly complex, which is involved in assembly and insertion of beta-barrel proteins into the outer membrane. The protein is Outer membrane protein assembly factor BamE of Acinetobacter pittii (strain PHEA-2).